The primary structure comprises 1914 residues: Fatty acid synthase beta subunit stcK (1914 aa).

The interval 17–395 (LYACFGGQGP…LEGTGMNVVN (379 aa)) is acetyltransferase (AT) domain. Residues 446–692 (TRLLGTPHVM…LIVEAPGVKD (247 aa)) form an enoyl reductase (ER) domain region. The segment at 1009–1509 (GECAWGYAAL…RANDRLRMEI (501 aa)) is dehydratase (DH) domain. The region spanning 1398-1532 (FLNRHGAPRV…VRVLKESTGE (135 aa)) is the MaoC-like domain. A malonyl/palmitoyl transferase (MT/PT) domain region spans residues 1548 to 1900 (YVFTGQGTQE…IRLVQGVTQS (353 aa)).

It belongs to the fungal fatty acid synthetase subunit beta family. In terms of assembly, [Alpha(6)beta(6)] hexamers of two multifunctional subunits (alpha and beta).

It carries out the reaction acetyl-CoA + n malonyl-CoA + 2n NADPH + 4n H(+) = a long-chain-acyl-CoA + n CoA + n CO2 + 2n NADP(+).. It catalyses the reaction holo-[ACP] + acetyl-CoA = acetyl-[ACP] + CoA. The catalysed reaction is holo-[ACP] + malonyl-CoA = malonyl-[ACP] + CoA. The enzyme catalyses a (3R)-hydroxyacyl-[ACP] = a (2E)-enoyl-[ACP] + H2O. It carries out the reaction a 2,3-saturated acyl-[ACP] + NAD(+) = a (2E)-enoyl-[ACP] + NADH + H(+). It catalyses the reaction (9Z)-octadecenoyl-[ACP] + H2O = (9Z)-octadecenoate + holo-[ACP] + H(+). The protein operates within mycotoxin biosynthesis; sterigmatocystin biosynthesis. Fatty acid synthase beta subunit; part of the gene cluster that mediates the biosynthesis of sterigmatocystin (ST), a polyketide-derived furanocoumarin which is part of the most toxic and carcinogenic compounds among the known mycotoxins. The first step in the biosynthesis of sterigmatocystin is the production of hexanoate by the fatty acid synthase (FAS) units stcJ and stcK. The polyketide backbone is assembled by the non-reducing polyketide synthase stcA by condensation of the starter hexanoyl-CoA and 7 malonyl-CoA extender units followed by cyclization and release of norsolorinic acid. Norsolorinic acid is the first stable intermediate in the biosynthesis of sterigmatocystin and is converted into averantin (AVN) by the ketoreductase stcE which reduces the hexanoate ketone to an alcohol. Averantin is then oxidized into 5'-hydroxyaverantin (HAVN) by the cytochrome P450 monooxygenase stcF. 5'-hydroxyaverantin is further converted to 5'-oxyaverantin (OAVN) by the 5'-hydroxyaverantin dehydrogenase stcG. The next step is the conversion of OAVN into averufin (AVF) which is catalyzed by a yet to be identified enzyme. The cytochrome P450 monooxygenase stcB and the flavin-binding monooxygenase stcW are both required for the conversion of averufin to 1-hydroxyversicolorone. The esterase stcI probably catalyzes the formation of versiconal hemiacetal acetate from 1-hydroxyversicolorone. The oxydoreductase stcN then probably catalyzes the biosynthetic step from versiconal to versicolorin B (VERB). The next step is performed by the versicolorin B desaturase stcL to produce versicolorin A (VERA). The ketoreductase stcU and the cytochrome P450 monooxygenase stcS are involved in the conversion of versicolorin A to demethylsterigmatocystin. The Baeyer-Villiger oxidas stcQ and the reductase stcR might be involved in the biosynthetic step from versicolorin A to demethylsterigmatocystin. The final step in the biosynthesis of sterigmatocystin is the methylation of demethylsterigmatocystin catalyzed by the methyltransferase stcP. The protein is Fatty acid synthase beta subunit stcK of Emericella nidulans (strain FGSC A4 / ATCC 38163 / CBS 112.46 / NRRL 194 / M139) (Aspergillus nidulans).